The following is a 57-amino-acid chain: Large ribosomal subunit protein bL32c (57 aa).

Belongs to the bacterial ribosomal protein bL32 family.

Its subcellular location is the plastid. The protein localises to the chloroplast. The polypeptide is Large ribosomal subunit protein bL32c (Vitis vinifera (Grape)).